The following is a 388-amino-acid chain: MLAAFISRVLRRVAQKSARRVLVASRNSSNDATFEIKKCDLYLLEEGPPVTTVLTRAEGLKYYRMMLTVRRMELKADQLYKQKFIRGFCHLCDGQEACCVGLEAGINPSDHVITSYRAHGVCYTRGLSVRSILAELTGRRGGCAKGKGGSMHMYTKNFYGGNGIVGAQGPLGAGIALACKYKGNDEICLTLYGDGAANQGQIAEAFNMAALWKLPCVFICENNLYGMGTSTERAAASPDYYKRGNFIPGLKVDGMDVLCVREATKFAANYCRSGKGPILMELQTYRYHGHSMSDPGVSYRTREEIQEVRSKRDPIIILQDRMVNSKLATVEELKEIGAEVRKEIDDAAQFATTDPEPHLEELGHHIYSSDSSFEVRGANPWIKFKSVS.

The transit peptide at 1-27 (MLAAFISRVLRRVAQKSARRVLVASRN) directs the protein to the mitochondrion. Positions 90, 116, 117, 163, 165, 194, 195, 196, 223, and 225 each coordinate pyruvate. Residues Tyr116, Arg117, Gly163, Val165, Asp194, Gly195, Ala196, and Asn223 each coordinate thiamine diphosphate. Position 194 (Asp194) interacts with Mg(2+). Mg(2+)-binding residues include Asn223 and Tyr225. Residue His290 participates in thiamine diphosphate binding. The residue at position 291 (Ser291) is a Phosphoserine; by PDK1, PDK2, PDK3 and PDK4. A Phosphoserine modification is found at Ser293. Phosphoserine; by PDK3 is present on Ser298.

Heterotetramer of two PDHA2 and two PDHB subunits. The heterotetramer interacts with DLAT, and is part of the multimeric pyruvate dehydrogenase complex that contains multiple copies of pyruvate dehydrogenase (E1), dihydrolipoamide acetyltransferase (DLAT, E2) and lipoamide dehydrogenase (DLD, E3). These subunits are bound to an inner core composed of about 48 DLAT and 12 PDHX molecules. Requires thiamine diphosphate as cofactor. Mg(2+) is required as a cofactor. In terms of processing, phosphorylation at Ser-291, Ser-293 and Ser-298 by PDK family kinases inactivates the enzyme; for this phosphorylation at a single site is sufficient. Phosphorylation at Ser-293 interferes with access to active site, and thereby inactivates the enzyme. Dephosphorylation at all three sites, i.e. at Ser-291, Ser-293 and Ser-298, is required for reactivation. In terms of tissue distribution, testis. Expressed in postmeiotic spermatogenic cells.

Its subcellular location is the mitochondrion matrix. The enzyme catalyses N(6)-[(R)-lipoyl]-L-lysyl-[protein] + pyruvate + H(+) = N(6)-[(R)-S(8)-acetyldihydrolipoyl]-L-lysyl-[protein] + CO2. Its activity is regulated as follows. Pyruvate dehydrogenase activity is inhibited by phosphorylation of PDHA2; it is reactivated by dephosphorylation. Functionally, the pyruvate dehydrogenase complex catalyzes the overall conversion of pyruvate to acetyl-CoA and CO(2), and thereby links the glycolytic pathway to the tricarboxylic cycle. In Homo sapiens (Human), this protein is Pyruvate dehydrogenase E1 component subunit alpha, testis-specific form, mitochondrial (PDHA2).